The chain runs to 278 residues: Manganese import system permease protein ScaB (278 aa).

8 consecutive transmembrane segments (helical) span residues 18-38 (ALIT…FIIL), 40-60 (GMSL…ALSF), 61-81 (ILGI…SILI), 136-156 (VTIG…RPLL), 172-192 (VKLY…TAMQ), 194-214 (VGTI…YLYA), 220-240 (MMLL…FIGY), and 244-264 (IAVG…SFFI).

The protein belongs to the ABC-3 integral membrane protein family.

Its subcellular location is the cell membrane. In terms of biological role, part of an ABC transporter complex involved in manganese import. The sequence is that of Manganese import system permease protein ScaB from Streptococcus pneumoniae.